The sequence spans 336 residues: Type II methyltransferase M2.HphI (336 aa).

Belongs to the N(4)/N(6)-methyltransferase family.

The enzyme catalyses a 2'-deoxyadenosine in DNA + S-adenosyl-L-methionine = an N(6)-methyl-2'-deoxyadenosine in DNA + S-adenosyl-L-homocysteine + H(+). Its function is as follows. An alpha subtype methylase that recognizes the double-stranded sequence 5'-GGTGA-3', probably methylates A-5 on the top strand, and protects the DNA from cleavage by the HphI endonuclease. This is Type II methyltransferase M2.HphI (hphIBM) from Haemophilus parahaemolyticus.